Reading from the N-terminus, the 75-residue chain is MMKLTCVLIIAVLFLTACQLTTAETRDEYRAVRSSDEVRNSRSTRDCSGSGYGCKNTPCCDGLTCRGPHQGPICL.

The signal sequence occupies residues 1–23 (MMKLTCVLIIAVLFLTACQLTTA). A propeptide spanning residues 24-45 (ETRDEYRAVRSSDEVRNSRSTR) is cleaved from the precursor. A compositionally biased stretch (basic and acidic residues) spans 31-45 (AVRSSDEVRNSRSTR). A disordered region spans residues 31-50 (AVRSSDEVRNSRSTRDCSGS). Disulfide bonds link cysteine 47–cysteine 60, cysteine 54–cysteine 65, and cysteine 59–cysteine 74.

The protein belongs to the conotoxin O1 superfamily. Expressed by the venom duct.

Its subcellular location is the secreted. This Conus ventricosus (Mediterranean cone) protein is Conotoxin VnMKLT2-012.